Here is a 320-residue protein sequence, read N- to C-terminus: Protoheme IX farnesyltransferase (320 aa).

Residues 1–24 (MSMITERPVSDPAGQSVSATGDGA) are disordered. 8 helical membrane-spanning segments follow: residues 33 to 55 (AVVA…VTTV), 68 to 88 (LWLM…ASVL), 117 to 137 (NALI…AVFT), 140 to 160 (LAAG…TAWL), 183 to 203 (WAAV…VVFF), 241 to 261 (ILVF…LGAG), 262 to 282 (MGPI…VEAH), and 300 to 320 (FHWS…DALI).

The protein belongs to the UbiA prenyltransferase family. Protoheme IX farnesyltransferase subfamily.

The protein localises to the cell membrane. The enzyme catalyses heme b + (2E,6E)-farnesyl diphosphate + H2O = Fe(II)-heme o + diphosphate. It functions in the pathway porphyrin-containing compound metabolism; heme O biosynthesis; heme O from protoheme: step 1/1. Its function is as follows. Converts heme B (protoheme IX) to heme O by substitution of the vinyl group on carbon 2 of heme B porphyrin ring with a hydroxyethyl farnesyl side group. This is Protoheme IX farnesyltransferase from Salinispora tropica (strain ATCC BAA-916 / DSM 44818 / JCM 13857 / NBRC 105044 / CNB-440).